The primary structure comprises 440 residues: Integral membrane protein GPR180 (440 aa).

An N-terminal signal peptide occupies residues 1–22 (MGGLRLLAVALTCCWWPQGSQG). N-linked (GlcNAc...) asparagine glycosylation is found at N105 and N110. 7 helical membrane passes run 173 to 193 (FFFL…QSLW), 202 to 222 (MHMI…SALA), 249 to 269 (IASQ…WTIV), 284 to 304 (TPAS…LLLW), 321 to 341 (LAGI…GCGL), 360 to 380 (FAKG…ISVI), and 389 to 409 (VITI…YRLF).

Its subcellular location is the membrane. This chain is Integral membrane protein GPR180 (GPR180), found in Homo sapiens (Human).